A 133-amino-acid chain; its full sequence is Small ribosomal subunit protein uS8 (133 aa).

The protein belongs to the universal ribosomal protein uS8 family. In terms of assembly, part of the 30S ribosomal subunit.

One of the primary rRNA binding proteins, it binds directly to 16S rRNA central domain where it helps coordinate assembly of the platform of the 30S subunit. The sequence is that of Small ribosomal subunit protein uS8 from Sulfolobus acidocaldarius (strain ATCC 33909 / DSM 639 / JCM 8929 / NBRC 15157 / NCIMB 11770).